We begin with the raw amino-acid sequence, 336 residues long: G-protein coupled receptor homolog FPV027 (336 aa).

Over 1–31 (MSMNNITSKMNQDSYGYFQLHMSDFTRVSLS) the chain is Extracellular. An N-linked (GlcNAc...) asparagine; by host glycan is attached at asparagine 5. Residues 32–52 (IVFTLVFLVGIIGNAVIIWFI) traverse the membrane as a helical segment. Topologically, residues 53–63 (GFKWTKTISTL) are cytoplasmic. Residues 64–84 (LFINLALADSLFLIFIPVYTV) form a helical membrane-spanning segment. Residues 85-101 (YVLSNFHWYLGEFLCRV) lie on the Extracellular side of the membrane. Cysteines 99 and 178 form a disulfide. The helical transmembrane segment at 102–122 (SSFFFTTNMYASMFLLTFISI) threads the bilayer. Over 123 to 143 (DKYLTLTSHRLVYKYRKYRNY) the chain is Cytoplasmic. Residues 144–164 (YVCIGAIWCISIALGVPTLYY) form a helical membrane-spanning segment. The Extracellular segment spans residues 165-200 (KRVILSSSRNETRCISYYGDDKHTAITIYRIIVCIR). A glycan (N-linked (GlcNAc...) asparagine; by host) is linked at asparagine 174. Residues 201–221 (FIIGYVFPMTVILLSYALIVY) traverse the membrane as a helical segment. Residues 222-240 (KVKFINKPPNRSFMITTAS) are Cytoplasmic-facing. A helical transmembrane segment spans residues 241 to 261 (IFVFLACWTPHHVLNIISLYG). Residues 262–276 (LKSTSMYNYIKESIP) lie on the Extracellular side of the membrane. The helical transmembrane segment at 277–297 (FVNAIAFVYSAINPIIYIFVI) threads the bilayer. Residues 298–336 (RLTSTYDSDTMDELRSALLDEETTSTEDCSDIEISDISR) are Cytoplasmic-facing.

This sequence belongs to the G-protein coupled receptor 1 family.

Its subcellular location is the host cell membrane. The sequence is that of G-protein coupled receptor homolog FPV027 from Vertebrata (FPV).